The following is a 145-amino-acid chain: Plastocyanin, chloroplastic (145 aa).

The N-terminal 47 residues, 1–47 (MKATLRAPASRASAVRPVASLKAAAQRVASVAGVSVASLALTLAAHA), are a transit peptide targeting the chloroplast. The Plastocyanin-like domain occupies 48 to 145 (DATVKLGADS…AGMVGKIIVQ (98 aa)). Residues His-85, Cys-130, His-133, and Met-138 each contribute to the Cu cation site.

This sequence belongs to the plastocyanin family. The cofactor is Cu(2+).

The protein resides in the plastid. It is found in the chloroplast thylakoid membrane. Participates in electron transfer between P700 and the cytochrome b6-f complex in photosystem I. In Chlamydomonas reinhardtii (Chlamydomonas smithii), this protein is Plastocyanin, chloroplastic (PETE).